The primary structure comprises 360 residues: Phospho-N-acetylmuramoyl-pentapeptide-transferase (360 aa).

10 helical membrane-spanning segments follow: residues 26-46 (AILGLLTALVFSLWFGPKLIE), 74-94 (MGGLLILAAIFISVLLWGDLG), 97-117 (YVWVMLFVLGSFGLIGFIDDY), 134-154 (YILQSLAALLIAFFLYATAAN), 168-188 (VMPQLGAVFIVLAYFTIVGSS), 199-219 (GLAIMPTVMVAAAFALIAYLS), 236-256 (SGELVIVCTAIVGAGLGFLWF), 263-283 (VFMGDVGSLSLGAALGTIAVL), 288-308 (ILLVIMGGVFVMETLSVILQV), and 338-358 (VIVRFWIISIFLVLLGLATLK).

The protein belongs to the glycosyltransferase 4 family. MraY subfamily. Mg(2+) serves as cofactor.

Its subcellular location is the cell inner membrane. It carries out the reaction UDP-N-acetyl-alpha-D-muramoyl-L-alanyl-gamma-D-glutamyl-meso-2,6-diaminopimeloyl-D-alanyl-D-alanine + di-trans,octa-cis-undecaprenyl phosphate = di-trans,octa-cis-undecaprenyl diphospho-N-acetyl-alpha-D-muramoyl-L-alanyl-D-glutamyl-meso-2,6-diaminopimeloyl-D-alanyl-D-alanine + UMP. It participates in cell wall biogenesis; peptidoglycan biosynthesis. In terms of biological role, catalyzes the initial step of the lipid cycle reactions in the biosynthesis of the cell wall peptidoglycan: transfers peptidoglycan precursor phospho-MurNAc-pentapeptide from UDP-MurNAc-pentapeptide onto the lipid carrier undecaprenyl phosphate, yielding undecaprenyl-pyrophosphoryl-MurNAc-pentapeptide, known as lipid I. This Shewanella baltica (strain OS195) protein is Phospho-N-acetylmuramoyl-pentapeptide-transferase.